The chain runs to 186 residues: Ribosome-recycling factor (186 aa).

Belongs to the RRF family.

The protein localises to the cytoplasm. Its function is as follows. Responsible for the release of ribosomes from messenger RNA at the termination of protein biosynthesis. May increase the efficiency of translation by recycling ribosomes from one round of translation to another. The sequence is that of Ribosome-recycling factor from Burkholderia ambifaria (strain ATCC BAA-244 / DSM 16087 / CCUG 44356 / LMG 19182 / AMMD) (Burkholderia cepacia (strain AMMD)).